The following is a 292-amino-acid chain: tRNA-splicing endonuclease (292 aa).

Catalysis depends on residues Tyr-231, His-238, and Lys-267.

Belongs to the tRNA-intron endonuclease family. Archaeal long subfamily. As to quaternary structure, homodimer.

It catalyses the reaction pretRNA = a 3'-half-tRNA molecule with a 5'-OH end + a 5'-half-tRNA molecule with a 2',3'-cyclic phosphate end + an intron with a 2',3'-cyclic phosphate and a 5'-hydroxyl terminus.. In terms of biological role, endonuclease that removes tRNA introns. Cleaves pre-tRNA at the 5'- and 3'-splice sites to release the intron. The products are an intron and two tRNA half-molecules bearing 2',3' cyclic phosphate and 5'-OH termini. Recognizes a pseudosymmetric substrate in which 2 bulged loops of 3 bases are separated by a stem of 4 bp. The polypeptide is tRNA-splicing endonuclease (Thermoplasma volcanium (strain ATCC 51530 / DSM 4299 / JCM 9571 / NBRC 15438 / GSS1)).